A 532-amino-acid chain; its full sequence is Apoptosis-inducing factor 1, mitochondrial (532 aa).

A mitochondrion-targeting transit peptide spans 1 to 26; it reads MIRNLTKLTKFTIGNRFYQSSSKGRF. The disordered stretch occupies residues 63-84; that stretch reads STPSIDVKEKKSQPPKTKEDYQ. The tract at residues 98 to 440 is FAD-dependent oxidoreductase; the sequence is YVIIGGGTAA…APYTYQPFFW (343 aa). Residues 102–106, 128–129, Arg136, and Lys141 each bind FAD; these read GGGTA and KE. Trp160 lines the NAD(+) pocket. 2 residues coordinate FAD: Val188 and Arg236. NAD(+) is bound by residues 260 to 263, Glu288, and Gly353; that span reads GGFL. Asp392 provides a ligand contact to FAD. The Nuclear localization signal motif lies at 400–406; the sequence is SLGVRRR. NAD(+) contacts are provided by residues 408-409, Trp440, and Glu450; that span reads EH. FAD contacts are provided by residues 409-410 and Trp440; that span reads HH.

It belongs to the FAD-dependent oxidoreductase family. Requires FAD as cofactor.

It localises to the mitochondrion. It is found in the cytoplasm. Its subcellular location is the nucleus. The catalysed reaction is A + NADH + H(+) = AH2 + NAD(+). Its function is as follows. Probable NADH oxidoreductase that acts as a caspase-independent mitochondrial effector of apoptotic cell death. The polypeptide is Apoptosis-inducing factor 1, mitochondrial (aif) (Dictyostelium discoideum (Social amoeba)).